A 337-amino-acid polypeptide reads, in one-letter code: Geranylgeranyl pyrophosphate synthase subD (337 aa).

Isopentenyl diphosphate-binding residues include Lys53, Arg56, and His85. Residues Asp92 and Asp96 each contribute to the Mg(2+) site. Arg101 is a dimethylallyl diphosphate binding site. An isopentenyl diphosphate-binding site is contributed by Arg102. Dimethylallyl diphosphate contacts are provided by Lys179, Thr180, and Gln219. Asp222 contacts Mg(2+). Dimethylallyl diphosphate contacts are provided by Asn226, Lys236, and Lys246.

Belongs to the FPP/GGPP synthase family. Mg(2+) is required as a cofactor.

It catalyses the reaction isopentenyl diphosphate + dimethylallyl diphosphate = (2E)-geranyl diphosphate + diphosphate. The catalysed reaction is isopentenyl diphosphate + (2E)-geranyl diphosphate = (2E,6E)-farnesyl diphosphate + diphosphate. It carries out the reaction isopentenyl diphosphate + (2E,6E)-farnesyl diphosphate = (2E,6E,10E)-geranylgeranyl diphosphate + diphosphate. The protein operates within secondary metabolite biosynthesis; terpenoid biosynthesis. Its function is as follows. Geranylgeranyl pyrophosphate synthase; part of the gene cluster that mediates the biosynthesis of the immunosuppressants subglutinols, meroterpenoids consisting of an alpha-pyrone (4-hydroxy-5,6-dimethyl-2-pyrone) moiety attached to a decalin core fused to a five-membered cyclic ether carrying a prenylside chain. The first step of the pathway is the synthesis of the alpha-pyrone moiety by the polyketide synthase subA via condensation of one acetyl-CoA starter unit with 3 malonyl-CoA units and 2 methylations. The alpha-pyrone is then combined with geranylgeranyl pyrophosphate (GGPP) formed by the GGPP synthase subD through the action of the prenyltransferase subC to yield a linear alpha-pyrone diterpenoid. Subsequent steps in the subglutinol biosynthetic pathway involve the decalin core formation, which is thought to be initiated by the epoxidation of the C10-C11 olefin by the FAD-dependent oxidoreductase subE. The following cyclization cascade would be catalyzed by the terpene cyclase subB. Lastly, the FAD-dependent dehydrogenase subF probably catalyzes the five-membered cyclic ether formation to complete the formation of subglutinol A. Subsequent redox reactions appear to give rise to subglutinol C and D, however, it remains unclear which enzymes are responsible for these transformations. SubD may have secondary function in the conversion of the identified subglutinols to subglutinol analog 45, which seems to be the major product of the cluster. This Metarhizium robertsii (strain ARSEF 23 / ATCC MYA-3075) (Metarhizium anisopliae (strain ARSEF 23)) protein is Geranylgeranyl pyrophosphate synthase subD.